Here is a 206-residue protein sequence, read N- to C-terminus: Ribonuclease HII (206 aa).

The 180-residue stretch at 27-206 folds into the RNase H type-2 domain; that stretch reads ARIAGVDEAG…CALHRRSFKH (180 aa). Positions 33, 34, and 125 each coordinate a divalent metal cation.

The protein belongs to the RNase HII family. It depends on Mn(2+) as a cofactor. Mg(2+) serves as cofactor.

The protein localises to the cytoplasm. It carries out the reaction Endonucleolytic cleavage to 5'-phosphomonoester.. Endonuclease that specifically degrades the RNA of RNA-DNA hybrids. The chain is Ribonuclease HII from Moorella thermoacetica (strain ATCC 39073 / JCM 9320).